We begin with the raw amino-acid sequence, 608 residues long: 1-deoxy-D-xylulose-5-phosphate synthase (608 aa).

Thiamine diphosphate is bound by residues His-66 and 107–109 (GHA). Residue Asp-138 participates in Mg(2+) binding. Thiamine diphosphate contacts are provided by residues 139–140 (GA), Asn-167, Phe-277, and Glu-350. Position 167 (Asn-167) interacts with Mg(2+).

The protein belongs to the transketolase family. DXPS subfamily. In terms of assembly, homodimer. Mg(2+) serves as cofactor. Thiamine diphosphate is required as a cofactor.

It carries out the reaction D-glyceraldehyde 3-phosphate + pyruvate + H(+) = 1-deoxy-D-xylulose 5-phosphate + CO2. It functions in the pathway metabolic intermediate biosynthesis; 1-deoxy-D-xylulose 5-phosphate biosynthesis; 1-deoxy-D-xylulose 5-phosphate from D-glyceraldehyde 3-phosphate and pyruvate: step 1/1. Its function is as follows. Catalyzes the acyloin condensation reaction between C atoms 2 and 3 of pyruvate and glyceraldehyde 3-phosphate to yield 1-deoxy-D-xylulose-5-phosphate (DXP). The sequence is that of 1-deoxy-D-xylulose-5-phosphate synthase from Thermotoga sp. (strain RQ2).